We begin with the raw amino-acid sequence, 421 residues long: Fasciclin-like arabinogalactan protein ARB_02922 (421 aa).

The first 17 residues, 1–17, serve as a signal peptide directing secretion; that stretch reads MLLYYILVALWATVTYA. FAS1 domains follow at residues 18 to 167 and 169 to 296; these read KSFS…DRPL and LPQS…SDVL. Residues N52, N75, N80, N120, N145, N181, N223, and N300 are each glycosylated (N-linked (GlcNAc...) asparagine). Residues 300 to 401 form a disordered region; that stretch reads NDTAKPVPNA…NTPQPGAAAT (102 aa). Composition is skewed to gly residues over residues 344–356 and 372–387; these read TSGG…GGGE and SGGG…GGPG. Over residues 388–401 the composition is skewed to low complexity; sequence PTATNTPQPGAAAT. G397 carries GPI-anchor amidated glycine lipidation. Positions 398-421 are cleaved as a propeptide — removed in mature form; the sequence is AAATERAKAGLAAVVGLGVVLINA.

The protein belongs to the fasciclin-like AGP family.

The protein resides in the cell membrane. Its function is as follows. May be a cell surface adhesion protein. The sequence is that of Fasciclin-like arabinogalactan protein ARB_02922 from Arthroderma benhamiae (strain ATCC MYA-4681 / CBS 112371) (Trichophyton mentagrophytes).